The following is a 307-amino-acid chain: Methionyl-tRNA formyltransferase (307 aa).

110–113 is a binding site for (6S)-5,6,7,8-tetrahydrofolate; it reads SLLP.

Belongs to the Fmt family.

It catalyses the reaction L-methionyl-tRNA(fMet) + (6R)-10-formyltetrahydrofolate = N-formyl-L-methionyl-tRNA(fMet) + (6S)-5,6,7,8-tetrahydrofolate + H(+). Its function is as follows. Attaches a formyl group to the free amino group of methionyl-tRNA(fMet). The formyl group appears to play a dual role in the initiator identity of N-formylmethionyl-tRNA by promoting its recognition by IF2 and preventing the misappropriation of this tRNA by the elongation apparatus. This Chromobacterium violaceum (strain ATCC 12472 / DSM 30191 / JCM 1249 / CCUG 213 / NBRC 12614 / NCIMB 9131 / NCTC 9757 / MK) protein is Methionyl-tRNA formyltransferase.